The primary structure comprises 661 residues: Galactan 5-O-arabinofuranosyltransferase (661 aa).

A run of 13 helical transmembrane segments spans residues 26–46 (LVAI…LWMG), 64–84 (VASA…WLWL), 108–128 (ALTY…VLAI), 194–214 (AFQP…VPVW), 217–237 (ITGS…IILA), 243–263 (PYAA…SRIA), 265–285 (GDKF…TFYT), 286–306 (LFTG…AAIV), 312–332 (PLLW…ISWG), 362–382 (VPFL…IYLV), 393–413 (MWVG…ITLL), 418–438 (LGFR…VLGI), and 458–478 (TATH…LYYA).

This sequence belongs to the glycosyltransferase 85 family.

Its subcellular location is the cell membrane. The catalysed reaction is Adds an alpha-D-arabinofuranosyl group from trans,octacis-decaprenylphospho-beta-D-arabinofuranose at the 5-O-position of the eighth, tenth and twelfth galactofuranose unit of the galactofuranan chain of [beta-D-galactofuranosyl-(1-&gt;5)-beta-D-galactofuranosyl-(1-&gt;6)]14-beta-D-galactofuranosyl-(1-&gt;5)-beta-D-galactofuranosyl-(1-&gt;4)-alpha-L-rhamnopyranosyl-(1-&gt;3)-N-acetyl-alpha-D-glucosaminyl-diphospho-trans,octacis-decaprenol.. It functions in the pathway cell wall biogenesis; cell wall polysaccharide biosynthesis. In terms of biological role, involved in the biosynthesis of the arabinogalactan (AG) region of the mycolylarabinogalactan-peptidoglycan (mAGP) complex, an essential component of the cell wall. Catalyzes the addition of the first key arabinofuranosyl (Araf) residue from the sugar donor decaprenyl-phospho-arabinose (DPA) on the C-5 of a 6-linked galactofuranosyl (Galf) of the galactan domain, thus 'priming' the galactan for further elaboration by other arabinofuranosyltransferases. The polypeptide is Galactan 5-O-arabinofuranosyltransferase (Corynebacterium glutamicum (strain ATCC 13032 / DSM 20300 / JCM 1318 / BCRC 11384 / CCUG 27702 / LMG 3730 / NBRC 12168 / NCIMB 10025 / NRRL B-2784 / 534)).